A 390-amino-acid polypeptide reads, in one-letter code: Malonyl-CoA-acyl carrier protein transacylase, mitochondrial (390 aa).

The N-terminal 21 residues, 1–21 (MSVRVARVAWVRGLGASYRRG), are a transit peptide targeting the mitochondrion. Residues Ser-153 and His-270 contribute to the active site. N6-succinyllysine is present on Lys-314.

This sequence belongs to the type II malonyltransferase family.

The protein localises to the mitochondrion. It catalyses the reaction holo-[ACP] + malonyl-CoA = malonyl-[ACP] + CoA. The protein operates within lipid metabolism; fatty acid biosynthesis. In terms of biological role, catalyzes the transfer of a malonyl moiety from malonyl-CoA to the free thiol group of the phosphopantetheine arm of the mitochondrial ACP protein (NDUFAB1). This suggests the existence of the biosynthesis of fatty acids in mitochondria. Also acts as a mitochondrial small ribosomal subunit (mt-SSU) assembly factor. In Homo sapiens (Human), this protein is Malonyl-CoA-acyl carrier protein transacylase, mitochondrial.